Here is a 126-residue protein sequence, read N- to C-terminus: LWamide neuropeptides (126 aa).

Residues 1 to 2 (KR) constitute a propeptide, 1. Residues 1 to 126 (KRQQPGLWGR…KSAIPKAKPQ (126 aa)) form a disordered region. W8 bears the Tryptophan amide mark. Positions 11–15 (SADPQ) are cleaved as a propeptide — 2. A tryptophan amide mark is found at W20 and W29. Positions 32-36 (SADPQ) are cleaved as a propeptide — 2. W41 and W50 each carry tryptophan amide. Positions 53–57 (SADPQ) are cleaved as a propeptide — 2. W62 and W71 each carry tryptophan amide. A propeptide spans 74-78 (SADPQ) (2). Tryptophan amide is present on W83. A propeptide spans 86 to 93 (SAGSGKRQ) (3). W99 bears the Tryptophan amide mark. Positions 102–126 (SAEPPQYKELEDLKQKSAIPKAKPQ) are cleaved as a propeptide — 4. A compositionally biased stretch (basic and acidic residues) spans 107-116 (QYKELEDLKQ).

The protein belongs to the LWamide neuropeptide family.

The protein resides in the secreted. Its function is as follows. Metamorphosin A may be part of an internal signaling system involved in control of metamorphosis. The protein is LWamide neuropeptides of Anemonia sulcata (Mediterranean snakelocks sea anemone).